We begin with the raw amino-acid sequence, 479 residues long: Adenosylhomocysteinase (479 aa).

Residues Thr-65, Asp-144, and Glu-204 each coordinate substrate. Residue 205-207 participates in NAD(+) binding; the sequence is TTT. Lys-234 and Asp-238 together coordinate substrate. NAD(+)-binding positions include Asn-239, 268–273, Glu-291, Asn-326, 347–349, and Asn-392; these read GYGDVG and IGH.

The protein belongs to the adenosylhomocysteinase family. It depends on NAD(+) as a cofactor.

It localises to the cytoplasm. It carries out the reaction S-adenosyl-L-homocysteine + H2O = L-homocysteine + adenosine. It functions in the pathway amino-acid biosynthesis; L-homocysteine biosynthesis; L-homocysteine from S-adenosyl-L-homocysteine: step 1/1. Its function is as follows. May play a key role in the regulation of the intracellular concentration of adenosylhomocysteine. This Variovorax paradoxus (strain S110) protein is Adenosylhomocysteinase.